Consider the following 751-residue polypeptide: E3 ubiquitin-protein ligase SMURF2 (751 aa).

The region spanning 1–119 is the C2 domain; it reads MSNQGSRRNG…TGYQRLDLCK (119 aa). One can recognise a WW 1 domain in the interval 157 to 190; that stretch reads NDLPDGWEERRTASGRIQYLNHITRTTQWERPTR. Polar residues predominate over residues 214 to 226; the sequence is GTNGASCGQTSDP. The disordered stretch occupies residues 214 to 236; the sequence is GTNGASCGQTSDPRISERRVRSQ. 2 WW domains span residues 251-284 and 297-330; these read PDLP…DPRV and GPLP…DPRL. The HECT domain occupies 417-751; it reads RPKDLWKRLM…IEETCGFAVE (335 aa). Cys-719 acts as the Glycyl thioester intermediate in catalysis.

It localises to the nucleus. Its subcellular location is the cytoplasm. The protein resides in the cell membrane. The protein localises to the membrane raft. It catalyses the reaction S-ubiquitinyl-[E2 ubiquitin-conjugating enzyme]-L-cysteine + [acceptor protein]-L-lysine = [E2 ubiquitin-conjugating enzyme]-L-cysteine + N(6)-ubiquitinyl-[acceptor protein]-L-lysine.. Its pathway is protein modification; protein ubiquitination. Functionally, E3 ubiquitin-protein ligase which accepts ubiquitin from an E2 ubiquitin-conjugating enzyme in the form of a thioester and then directly transfers the ubiquitin to targeted substrates. The sequence is that of E3 ubiquitin-protein ligase SMURF2 (smurf2) from Xenopus laevis (African clawed frog).